Reading from the N-terminus, the 398-residue chain is Argininosuccinate synthase (398 aa).

9 to 17 (AYSGGLDTS) contributes to the ATP binding site. The L-citrulline site is built by tyrosine 87 and serine 92. Glycine 117 is a binding site for ATP. Threonine 119, asparagine 123, and aspartate 124 together coordinate L-aspartate. Asparagine 123 is a binding site for L-citrulline. Residues arginine 127, serine 176, serine 185, glutamate 261, and tyrosine 273 each coordinate L-citrulline.

Belongs to the argininosuccinate synthase family. Type 1 subfamily. In terms of assembly, homotetramer.

It is found in the cytoplasm. It carries out the reaction L-citrulline + L-aspartate + ATP = 2-(N(omega)-L-arginino)succinate + AMP + diphosphate + H(+). It functions in the pathway amino-acid biosynthesis; L-arginine biosynthesis; L-arginine from L-ornithine and carbamoyl phosphate: step 2/3. This is Argininosuccinate synthase from Clostridium tetani (strain Massachusetts / E88).